Reading from the N-terminus, the 1357-residue chain is DNA-directed RNA polymerase subunit beta (1357 aa).

Belongs to the RNA polymerase beta chain family. In terms of assembly, the RNAP catalytic core consists of 2 alpha, 1 beta, 1 beta' and 1 omega subunit. When a sigma factor is associated with the core the holoenzyme is formed, which can initiate transcription.

It catalyses the reaction RNA(n) + a ribonucleoside 5'-triphosphate = RNA(n+1) + diphosphate. Functionally, DNA-dependent RNA polymerase catalyzes the transcription of DNA into RNA using the four ribonucleoside triphosphates as substrates. This Pseudomonas putida (Arthrobacter siderocapsulatus) protein is DNA-directed RNA polymerase subunit beta.